The primary structure comprises 61 residues: U-stichotoxin-Hcr1a (61 aa).

Residues 1–21 (MKPAIFLMLFVAMFLISEGEG) form the signal peptide. Residues 22-31 (FKPKDAPQER) constitute a propeptide that is removed on maturation. Residue P36 is modified to Hydroxyproline. 2 cysteine pairs are disulfide-bonded: C41-C53 and C44-C59.

This sequence belongs to the Hau1a/HC18/HC19 family.

The protein resides in the secreted. Its subcellular location is the nematocyst. Its function is as follows. Toxin that is lethal to crab. Does not produce the typical symptoms associated with sodium channel toxins in crabs, suggesting that it likely does not act on sodium channels. This Radianthus crispa (Leathery sea anemone) protein is U-stichotoxin-Hcr1a.